Reading from the N-terminus, the 424-residue chain is Serine hydroxymethyltransferase (424 aa).

Residues Leu113 and 117–119 (GHL) each bind (6S)-5,6,7,8-tetrahydrofolate. Lys222 bears the N6-(pyridoxal phosphate)lysine mark. A (6S)-5,6,7,8-tetrahydrofolate-binding site is contributed by 361-363 (SPF).

It belongs to the SHMT family. Homodimer. Requires pyridoxal 5'-phosphate as cofactor.

It is found in the cytoplasm. The catalysed reaction is (6R)-5,10-methylene-5,6,7,8-tetrahydrofolate + glycine + H2O = (6S)-5,6,7,8-tetrahydrofolate + L-serine. It functions in the pathway one-carbon metabolism; tetrahydrofolate interconversion. Its pathway is amino-acid biosynthesis; glycine biosynthesis; glycine from L-serine: step 1/1. In terms of biological role, catalyzes the reversible interconversion of serine and glycine with tetrahydrofolate (THF) serving as the one-carbon carrier. This reaction serves as the major source of one-carbon groups required for the biosynthesis of purines, thymidylate, methionine, and other important biomolecules. Also exhibits THF-independent aldolase activity toward beta-hydroxyamino acids, producing glycine and aldehydes, via a retro-aldol mechanism. In Flavobacterium johnsoniae (strain ATCC 17061 / DSM 2064 / JCM 8514 / BCRC 14874 / CCUG 350202 / NBRC 14942 / NCIMB 11054 / UW101) (Cytophaga johnsonae), this protein is Serine hydroxymethyltransferase.